The chain runs to 368 residues: Proteinase-activated receptor 3 (368 aa).

Residues 1–21 (MEMKVLILVGVRLLFLPTTVC) form the signal peptide. Positions 22 to 37 (QSGMKHVSDNSALTAE) are cleaved as a propeptide — removed for receptor activation. Residues 38 to 93 (SFNGNEHSFEEFPLSDIEGWTGATTTIKAKCPEESITTLHVNNATMGYLRSSLSTK) lie on the Extracellular side of the membrane. Asparagine 80 carries N-linked (GlcNAc...) asparagine glycosylation. The chain crosses the membrane as a helical span at residues 94–114 (VIPAIYILVFVIGVPANIVTL). Residues 115–123 (WKLSSRTKS) lie on the Cytoplasmic side of the membrane. The chain crosses the membrane as a helical span at residues 124-144 (ICLVIFHTNLAIADLLFCVTL). Residues 145–166 (PFKIAYHLNGNDWVFGEVMCRV) lie on the Extracellular side of the membrane. Cysteine 164 and cysteine 243 are disulfide-bonded. A helical membrane pass occupies residues 167 to 187 (TTVAFYGNMYCAILILTCMGI). At 188–208 (NRYLATVHPFTYRKLPKRNFT) the chain is on the cytoplasmic side. The chain crosses the membrane as a helical span at residues 209–229 (LLMCGVVWVMVVLYMLPLAIL). Residues 230–257 (KQEYHLVQPGITTCHDVHDTCESPLPFQ) are Extracellular-facing. Residues 258–278 (FYYFVSLAFFGFLIPFVVSVF) form a helical membrane-spanning segment. Residues 279–300 (CYTTLIHKLNAQDRKWLRYIKA) lie on the Cytoplasmic side of the membrane. Residues 301 to 321 (VLLILVIFTICFAPTNIILII) traverse the membrane as a helical segment. Over 322–338 (HHANYYYSNTDSLYFMY) the chain is Extracellular. The chain crosses the membrane as a helical span at residues 339 to 359 (LIALCLGSLNSCLDPFLYFIM). The Cytoplasmic portion of the chain corresponds to 360–368 (SKIVDQLTS).

This sequence belongs to the G-protein coupled receptor 1 family. Interacts with INSC/inscuteable and GPSM2. A proteolytic cleavage generates a new N-terminus that functions as a tethered ligand.

The protein resides in the cell membrane. In terms of biological role, receptor for activated thrombin coupled to G proteins that stimulate phosphoinositide hydrolysis. This Rattus norvegicus (Rat) protein is Proteinase-activated receptor 3 (F2rl2).